A 516-amino-acid polypeptide reads, in one-letter code: HMG box-containing protein 1 (516 aa).

The tract at residues alanine 150–asparagine 182 is disordered. The segment covering serine 156–phenylalanine 165 has biased composition (low complexity). The segment covering proline 166 to asparagine 182 has biased composition (basic and acidic residues). The AXH domain maps to tryptophan 203–phenylalanine 345. The HMG box DNA-binding region spans cysteine 436–tryptophan 504.

In terms of assembly, binds TCF4. Binds RB1. Binds the second PAH repeat of SIN3A. Ubiquitinated by the CTLH E3 ubiquitin-protein ligase complex, leading to subsequent proteasomal degradation.

Its subcellular location is the nucleus. Its function is as follows. Transcriptional repressor that binds to the promoter region of target genes. Plays a role in the regulation of the cell cycle and of the Wnt pathway. Binds preferentially to the sequence 5'-TTCATTCATTCA-3'. Binding to the histone H1.0 promoter is enhanced by interaction with RB1. Disrupts the interaction between DNA and TCF4. The chain is HMG box-containing protein 1 (Hbp1) from Mus musculus (Mouse).